A 110-amino-acid chain; its full sequence is Iron-sulfur cluster assembly protein CyaY (110 aa).

It belongs to the frataxin family.

Functionally, involved in iron-sulfur (Fe-S) cluster assembly. May act as a regulator of Fe-S biogenesis. In Paracidovorax citrulli (strain AAC00-1) (Acidovorax citrulli), this protein is Iron-sulfur cluster assembly protein CyaY.